The following is a 573-amino-acid chain: ATP-dependent RNA helicase RhlB (573 aa).

A Q motif motif is present at residues 9–37; that stretch reads VTFSSFDLHPALIAGLESAGFTRCTPIQA. Residues 40-220 form the Helicase ATP-binding domain; sequence LPVALPGGDV…YEHMNEPEKL (181 aa). 53–60 serves as a coordination point for ATP; the sequence is AQTGTGKT. A DEAD box motif is present at residues 166–169; it reads DEAD. The Helicase C-terminal domain maps to 231–393; sequence RVRQRIYFPS…PVTSELLTPL (163 aa). The segment at 391–560 is disordered; that stretch reads TPLPRAPRVP…KPSGSPSLLS (170 aa). The span at 402–411 shows a compositional bias: acidic residues; the sequence is EGEEADDDAG. Basic and acidic residues predominate over residues 419–432; the sequence is REAREQRAAEEQRR. Residues 435–450 show a composition bias toward gly residues; that stretch reads GRSGSGGSRSGSGGGG. A compositionally biased stretch (basic and acidic residues) spans 451 to 462; it reads GRREGAGADGKP. A compositionally biased stretch (low complexity) spans 484 to 499; sequence PVVAAAAGQAPSAGVA. Residues 505–514 are compositionally biased toward basic residues; sequence PRKRRRRRNG. Residues 541 to 560 show a composition bias toward low complexity; sequence VVAKPVRAAAKPSGSPSLLS.

This sequence belongs to the DEAD box helicase family. RhlB subfamily. In terms of assembly, component of the RNA degradosome, which is a multiprotein complex involved in RNA processing and mRNA degradation.

The protein localises to the cytoplasm. The catalysed reaction is ATP + H2O = ADP + phosphate + H(+). DEAD-box RNA helicase involved in RNA degradation. Has RNA-dependent ATPase activity and unwinds double-stranded RNA. In Xanthomonas euvesicatoria pv. vesicatoria (strain 85-10) (Xanthomonas campestris pv. vesicatoria), this protein is ATP-dependent RNA helicase RhlB.